A 363-amino-acid polypeptide reads, in one-letter code: UDP-N-acetylglucosamine--N-acetylmuramyl-(pentapeptide) pyrophosphoryl-undecaprenol N-acetylglucosamine transferase (363 aa).

UDP-N-acetyl-alpha-D-glucosamine-binding positions include 14–16 (TGG), N122, R163, S190, and Q285.

It belongs to the glycosyltransferase 28 family. MurG subfamily.

The protein resides in the cell inner membrane. The catalysed reaction is di-trans,octa-cis-undecaprenyl diphospho-N-acetyl-alpha-D-muramoyl-L-alanyl-D-glutamyl-meso-2,6-diaminopimeloyl-D-alanyl-D-alanine + UDP-N-acetyl-alpha-D-glucosamine = di-trans,octa-cis-undecaprenyl diphospho-[N-acetyl-alpha-D-glucosaminyl-(1-&gt;4)]-N-acetyl-alpha-D-muramoyl-L-alanyl-D-glutamyl-meso-2,6-diaminopimeloyl-D-alanyl-D-alanine + UDP + H(+). It participates in cell wall biogenesis; peptidoglycan biosynthesis. In terms of biological role, cell wall formation. Catalyzes the transfer of a GlcNAc subunit on undecaprenyl-pyrophosphoryl-MurNAc-pentapeptide (lipid intermediate I) to form undecaprenyl-pyrophosphoryl-MurNAc-(pentapeptide)GlcNAc (lipid intermediate II). The sequence is that of UDP-N-acetylglucosamine--N-acetylmuramyl-(pentapeptide) pyrophosphoryl-undecaprenol N-acetylglucosamine transferase from Prochlorococcus marinus (strain AS9601).